A 362-amino-acid polypeptide reads, in one-letter code: MDAQDCQAAASPEPPGPPARSCVAAWWDMVDRNLRYFPHSCSMLGRKIAALYDSFTSKSLKEHVFLPLIDMLIYFNFFKAPFLVDLKKPELKIPHTVNFYLRVEPGVMLGIWHTVPSCRGEDAKGKDCCWYEAALRDGNPIIVYLHGSAEHRAASHRLKLVKVLSDGGFHVLSVDYRGFGDSTGKPTEEGLTTDAICVYEWTKARSGITPVCLWGHSLGTGVATNAAKVLEEKGCPVDAIVLEAPFTNMWVASINYPLLKIYRNIPGFLRTLMDALRKDKIIFPNDENVKFLSSPLLILHGEDDRTVPLEYGKKLYEIARNAYRNKERVKMVIFPPGFQHNLLCKSPTLLITVRDFLSKQWS.

This sequence belongs to the serine esterase family.

This is Protein ABHD12B from Homo sapiens (Human).